A 247-amino-acid polypeptide reads, in one-letter code: 2,3-bisphosphoglycerate-dependent phosphoglycerate mutase (247 aa).

Substrate-binding positions include Arg-8–Asn-15, Thr-21–Gly-22, Arg-60, Glu-87–Tyr-90, Lys-98, Arg-114–Arg-115, and Gly-183–Asn-184. Catalysis depends on His-9, which acts as the Tele-phosphohistidine intermediate. Glu-87 functions as the Proton donor/acceptor in the catalytic mechanism.

Belongs to the phosphoglycerate mutase family. BPG-dependent PGAM subfamily.

The catalysed reaction is (2R)-2-phosphoglycerate = (2R)-3-phosphoglycerate. It participates in carbohydrate degradation; glycolysis; pyruvate from D-glyceraldehyde 3-phosphate: step 3/5. Its function is as follows. Catalyzes the interconversion of 2-phosphoglycerate and 3-phosphoglycerate. The polypeptide is 2,3-bisphosphoglycerate-dependent phosphoglycerate mutase (Chlorobaculum tepidum (strain ATCC 49652 / DSM 12025 / NBRC 103806 / TLS) (Chlorobium tepidum)).